The sequence spans 178 residues: ATP-dependent protease subunit HslV (178 aa).

The active site involves Thr-7. 3 residues coordinate Na(+): Gly-162, Cys-165, and Thr-168.

The protein belongs to the peptidase T1B family. HslV subfamily. As to quaternary structure, a double ring-shaped homohexamer of HslV is capped on each side by a ring-shaped HslU homohexamer. The assembly of the HslU/HslV complex is dependent on binding of ATP.

Its subcellular location is the cytoplasm. The enzyme catalyses ATP-dependent cleavage of peptide bonds with broad specificity.. With respect to regulation, allosterically activated by HslU binding. Protease subunit of a proteasome-like degradation complex believed to be a general protein degrading machinery. The sequence is that of ATP-dependent protease subunit HslV from Ralstonia nicotianae (strain ATCC BAA-1114 / GMI1000) (Ralstonia solanacearum).